Here is a 95-residue protein sequence, read N- to C-terminus: Aspartyl/glutamyl-tRNA(Asn/Gln) amidotransferase subunit C (95 aa).

Belongs to the GatC family. As to quaternary structure, heterotrimer of A, B and C subunits.

The enzyme catalyses L-glutamyl-tRNA(Gln) + L-glutamine + ATP + H2O = L-glutaminyl-tRNA(Gln) + L-glutamate + ADP + phosphate + H(+). It carries out the reaction L-aspartyl-tRNA(Asn) + L-glutamine + ATP + H2O = L-asparaginyl-tRNA(Asn) + L-glutamate + ADP + phosphate + 2 H(+). Its function is as follows. Allows the formation of correctly charged Asn-tRNA(Asn) or Gln-tRNA(Gln) through the transamidation of misacylated Asp-tRNA(Asn) or Glu-tRNA(Gln) in organisms which lack either or both of asparaginyl-tRNA or glutaminyl-tRNA synthetases. The reaction takes place in the presence of glutamine and ATP through an activated phospho-Asp-tRNA(Asn) or phospho-Glu-tRNA(Gln). The protein is Aspartyl/glutamyl-tRNA(Asn/Gln) amidotransferase subunit C of Nitrosococcus oceani (strain ATCC 19707 / BCRC 17464 / JCM 30415 / NCIMB 11848 / C-107).